The chain runs to 425 residues: 3-phosphoshikimate 1-carboxyvinyltransferase (425 aa).

3-phosphoshikimate-binding residues include Lys-23, Ser-24, and Arg-28. Lys-23 contributes to the phosphoenolpyruvate binding site. Residues Gly-96 and Arg-124 each coordinate phosphoenolpyruvate. The 3-phosphoshikimate site is built by Thr-170, Ser-171, Gln-172, Ser-198, Asp-314, and Lys-341. Gln-172 is a phosphoenolpyruvate binding site. Catalysis depends on Asp-314, which acts as the Proton acceptor. Phosphoenolpyruvate contacts are provided by Arg-345, Arg-386, and Lys-411.

It belongs to the EPSP synthase family. Monomer.

Its subcellular location is the cytoplasm. It carries out the reaction 3-phosphoshikimate + phosphoenolpyruvate = 5-O-(1-carboxyvinyl)-3-phosphoshikimate + phosphate. It functions in the pathway metabolic intermediate biosynthesis; chorismate biosynthesis; chorismate from D-erythrose 4-phosphate and phosphoenolpyruvate: step 6/7. In terms of biological role, catalyzes the transfer of the enolpyruvyl moiety of phosphoenolpyruvate (PEP) to the 5-hydroxyl of shikimate-3-phosphate (S3P) to produce enolpyruvyl shikimate-3-phosphate and inorganic phosphate. The polypeptide is 3-phosphoshikimate 1-carboxyvinyltransferase (Nostoc sp. (strain PCC 7120 / SAG 25.82 / UTEX 2576)).